The following is a 254-amino-acid chain: Insulin-like growth factor-binding protein 4 (254 aa).

Residues 1–21 (MLPFGLVAALLLAAGPRPSLG) form the signal peptide. The region spanning 23–103 (EAIHCPPCSE…MHGQGVCTEL (81 aa)) is the IGFBP N-terminal domain. 6 cysteine pairs are disulfide-bonded: cysteine 27/cysteine 53, cysteine 30/cysteine 55, cysteine 38/cysteine 56, cysteine 44/cysteine 59, cysteine 67/cysteine 80, and cysteine 74/cysteine 100. A glycan (N-linked (GlcNAc...) asparagine) is linked at asparagine 125. 4 cysteine pairs are disulfide-bonded: cysteine 131/cysteine 138, cysteine 170/cysteine 200, cysteine 211/cysteine 222, and cysteine 224/cysteine 245. One can recognise a Thyroglobulin type-1 domain in the interval 167-245 (QGSCQSELHR…GLEPKGELDC (79 aa)). Residue serine 251 is modified to Phosphoserine.

In terms of assembly, binds IGF2 more than IGF1.

It localises to the secreted. Functionally, IGF-binding proteins prolong the half-life of the IGFs and have been shown to either inhibit or stimulate the growth promoting effects of the IGFs on cell culture. They alter the interaction of IGFs with their cell surface receptors. The chain is Insulin-like growth factor-binding protein 4 (Igfbp4) from Mus musculus (Mouse).